Consider the following 379-residue polypeptide: Alkanesulfonate monooxygenase (379 aa).

This sequence belongs to the SsuD family.

It carries out the reaction an alkanesulfonate + FMNH2 + O2 = an aldehyde + FMN + sulfite + H2O + 2 H(+). In terms of biological role, catalyzes the desulfonation of aliphatic sulfonates. The protein is Alkanesulfonate monooxygenase of Pseudomonas savastanoi pv. phaseolicola (strain 1448A / Race 6) (Pseudomonas syringae pv. phaseolicola (strain 1448A / Race 6)).